The sequence spans 591 residues: Aspartate--tRNA ligase (591 aa).

Glu-176 contributes to the L-aspartate binding site. Residues 200-203 (QILK) are aspartate. Arg-222 is a binding site for L-aspartate. ATP is bound by residues 222 to 224 (RDE) and Gln-231. His-450 is a binding site for L-aspartate. Glu-484 provides a ligand contact to ATP. Residue Arg-491 participates in L-aspartate binding. Residue 536-539 (GLDR) coordinates ATP.

Belongs to the class-II aminoacyl-tRNA synthetase family. Type 1 subfamily. In terms of assembly, homodimer.

It is found in the cytoplasm. The enzyme catalyses tRNA(Asp) + L-aspartate + ATP = L-aspartyl-tRNA(Asp) + AMP + diphosphate. Catalyzes the attachment of L-aspartate to tRNA(Asp) in a two-step reaction: L-aspartate is first activated by ATP to form Asp-AMP and then transferred to the acceptor end of tRNA(Asp). The chain is Aspartate--tRNA ligase from Listeria welshimeri serovar 6b (strain ATCC 35897 / DSM 20650 / CCUG 15529 / CIP 8149 / NCTC 11857 / SLCC 5334 / V8).